Consider the following 93-residue polypeptide: Small ribosomal subunit protein uS19 (93 aa).

It belongs to the universal ribosomal protein uS19 family.

Protein S19 forms a complex with S13 that binds strongly to the 16S ribosomal RNA. This Synechococcus sp. (strain JA-2-3B'a(2-13)) (Cyanobacteria bacterium Yellowstone B-Prime) protein is Small ribosomal subunit protein uS19.